Reading from the N-terminus, the 115-residue chain is Nucleoid-associated protein tlr0723 (115 aa).

Belongs to the YbaB/EbfC family. In terms of assembly, homodimer.

The protein localises to the cytoplasm. It localises to the nucleoid. In terms of biological role, binds to DNA and alters its conformation. May be involved in regulation of gene expression, nucleoid organization and DNA protection. The sequence is that of Nucleoid-associated protein tlr0723 from Thermosynechococcus vestitus (strain NIES-2133 / IAM M-273 / BP-1).